The sequence spans 354 residues: Ferrochelatase (354 aa).

Fe cation-binding residues include His-214 and Glu-295.

Belongs to the ferrochelatase family.

The protein resides in the cytoplasm. It carries out the reaction heme b + 2 H(+) = protoporphyrin IX + Fe(2+). Its pathway is porphyrin-containing compound metabolism; protoheme biosynthesis; protoheme from protoporphyrin-IX: step 1/1. Catalyzes the ferrous insertion into protoporphyrin IX. The chain is Ferrochelatase from Burkholderia orbicola (strain MC0-3).